A 129-amino-acid chain; its full sequence is MARQIRKTHAKQKKNIINGITHIKSTFNNTLITITDLKGSTLSWSSAGASGFKGTKKGTPFAAQIAAEKAAKQAIEQGIRQTEVLVNGPGAGRETAIRALQATGINITLIKDITPIPHNGCRPPKKRRV.

This sequence belongs to the universal ribosomal protein uS11 family. As to quaternary structure, part of the 30S ribosomal subunit.

It localises to the plastid. The protein localises to the chloroplast. The sequence is that of Small ribosomal subunit protein uS11c from Gracilaria tenuistipitata var. liui (Red alga).